The primary structure comprises 304 residues: Ferredoxin fas2 (304 aa).

The 4Fe-4S ferredoxin-type domain occupies 2-29; sequence KVVVNERRCFGSGQCVLVAPEVFEQSND. Residues cysteine 10, cysteine 16, and cysteine 54 each coordinate [3Fe-4S] cluster. The segment at 66-304 is transketolase-like; sequence MRQEPTEFSY…QSARSSIQQR (239 aa).

In the C-terminal section; belongs to the transketolase family. [3Fe-4S] cluster is required as a cofactor.

Functionally, plays a role in electron transfer. The fas operon encodes genes involved in cytokinin production and in host plant fasciation (leafy gall). The chain is Ferredoxin fas2 (fas2) from Rhodococcoides fascians (Rhodococcus fascians).